The chain runs to 94 residues: UPF0235 protein TK0768 (94 aa).

The protein belongs to the UPF0235 family.

This Thermococcus kodakarensis (strain ATCC BAA-918 / JCM 12380 / KOD1) (Pyrococcus kodakaraensis (strain KOD1)) protein is UPF0235 protein TK0768.